The following is a 556-amino-acid chain: Putative D-arabinono-1,4-lactone oxidase (556 aa).

The 171-residue stretch at 47-217 folds into the FAD-binding PCMH-type domain; that stretch reads FTSLPELYIQ…TEVTFKAVPA (171 aa). Pros-8alpha-FAD histidine is present on H84.

It belongs to the oxygen-dependent FAD-linked oxidoreductase family. It depends on FAD as a cofactor.

It is found in the mitochondrion membrane. The enzyme catalyses D-arabinono-1,4-lactone + O2 = dehydro-D-arabinono-1,4-lactone + H2O2 + H(+). Its pathway is cofactor biosynthesis; D-erythroascorbate biosynthesis; dehydro-D-arabinono-1,4-lactone from D-arabinose: step 2/2. This chain is Putative D-arabinono-1,4-lactone oxidase (alo-1), found in Neurospora crassa (strain ATCC 24698 / 74-OR23-1A / CBS 708.71 / DSM 1257 / FGSC 987).